We begin with the raw amino-acid sequence, 589 residues long: uncharacterized protein (589 aa).

Residues 242 to 314 enclose the RRM domain; the sequence is TALEVRNIPE…RFIKIFWYNP (73 aa). Disordered regions lie at residues 322–348, 443–465, and 566–589; these read PKKF…VDPA, ESPA…RGTN, and TSME…GRWR. Ser330 bears the Phosphoserine mark. Over residues 330-340 the composition is skewed to low complexity; the sequence is SPTTSDSSNVE. Residue Thr332 is modified to Phosphothreonine. Residue Ser334 is modified to Phosphoserine. Residues 566–579 are compositionally biased toward polar residues; that stretch reads TSMETGESNTSDNM.

The protein localises to the nucleus. This is an uncharacterized protein from Schizosaccharomyces pombe (strain 972 / ATCC 24843) (Fission yeast).